The following is a 262-amino-acid chain: DNA repair protein RecO (262 aa).

It belongs to the RecO family.

Functionally, involved in DNA repair and RecF pathway recombination. This is DNA repair protein RecO from Enterococcus faecalis (strain ATCC 700802 / V583).